The following is a 430-amino-acid chain: MPIPILHCDRNSKELYSRFLQGAREDLTTATDRILPILESVRTQGDQALFSYTEMFDGIKLSQLTIDPKKIKTNVDEKTKEAFLRAKSNIEAFHMEQKRESWSKVIDGNRLGVKYTPIPSLAVYAPGGKALYPSSVLMGIIPAKIAGVPSIQLITPPQKDGIPEILVWLAQIMDIDRIVTVGGAQGIAAAAYGTESVPKSEFIVGPGNAYVAAAKSYLSGQGLIGIESPAGPSEVCIIADENANPKWIACDMLSQAEHGEDSSAILLTTDLTLAKRVSEELEIAFSERPKRLQMKQTAIYENSSILVFPTLDDCIWFSNELAPEHLEIQTKDYESVFAKIEHAGSVFLGPYSPVAMGDYISGTNHILPTARGSRIYSSLGVDTFLKRVTFQEVTKESLENLYPFVKLMSELEGLDEEHGTSVKVRTRQFQ.

The NAD(+) site is built by Y124, Q185, and N208. Substrate is bound by residues S233, Q255, and H258. Zn(2+) contacts are provided by Q255 and H258. Catalysis depends on proton acceptor residues E324 and H325. Residues H325, D358, E412, and H418 each coordinate substrate. D358 contacts Zn(2+). Position 418 (H418) interacts with Zn(2+).

The protein belongs to the histidinol dehydrogenase family. It depends on Zn(2+) as a cofactor.

It carries out the reaction L-histidinol + 2 NAD(+) + H2O = L-histidine + 2 NADH + 3 H(+). Its pathway is amino-acid biosynthesis; L-histidine biosynthesis; L-histidine from 5-phospho-alpha-D-ribose 1-diphosphate: step 9/9. In terms of biological role, catalyzes the sequential NAD-dependent oxidations of L-histidinol to L-histidinaldehyde and then to L-histidine. In Leptospira biflexa serovar Patoc (strain Patoc 1 / Ames), this protein is Histidinol dehydrogenase.